The following is a 625-amino-acid chain: Phosphomethylpyrimidine synthase (625 aa).

Substrate is bound by residues asparagine 231, methionine 260, tyrosine 289, histidine 325, 345–347 (SRG), 386–389 (DGLR), and glutamate 425. Histidine 429 contacts Zn(2+). Tyrosine 452 is a substrate binding site. Histidine 493 is a binding site for Zn(2+). Residues cysteine 573, cysteine 576, and cysteine 581 each contribute to the [4Fe-4S] cluster site.

It belongs to the ThiC family. Homodimer. [4Fe-4S] cluster serves as cofactor.

It catalyses the reaction 5-amino-1-(5-phospho-beta-D-ribosyl)imidazole + S-adenosyl-L-methionine = 4-amino-2-methyl-5-(phosphooxymethyl)pyrimidine + CO + 5'-deoxyadenosine + formate + L-methionine + 3 H(+). It functions in the pathway cofactor biosynthesis; thiamine diphosphate biosynthesis. Catalyzes the synthesis of the hydroxymethylpyrimidine phosphate (HMP-P) moiety of thiamine from aminoimidazole ribotide (AIR) in a radical S-adenosyl-L-methionine (SAM)-dependent reaction. This Acinetobacter baumannii (strain SDF) protein is Phosphomethylpyrimidine synthase.